We begin with the raw amino-acid sequence, 279 residues long: Putative pyruvate, phosphate dikinase regulatory protein (279 aa).

156–163 (GVSRTSKT) lines the ADP pocket.

The protein belongs to the pyruvate, phosphate/water dikinase regulatory protein family. PDRP subfamily.

It catalyses the reaction N(tele)-phospho-L-histidyl/L-threonyl-[pyruvate, phosphate dikinase] + ADP = N(tele)-phospho-L-histidyl/O-phospho-L-threonyl-[pyruvate, phosphate dikinase] + AMP + H(+). The enzyme catalyses N(tele)-phospho-L-histidyl/O-phospho-L-threonyl-[pyruvate, phosphate dikinase] + phosphate + H(+) = N(tele)-phospho-L-histidyl/L-threonyl-[pyruvate, phosphate dikinase] + diphosphate. Functionally, bifunctional serine/threonine kinase and phosphorylase involved in the regulation of the pyruvate, phosphate dikinase (PPDK) by catalyzing its phosphorylation/dephosphorylation. The sequence is that of Putative pyruvate, phosphate dikinase regulatory protein from Maricaulis maris (strain MCS10) (Caulobacter maris).